A 288-amino-acid chain; its full sequence is uncharacterized protein (288 aa).

NAD(+) contacts are provided by residues Gly6–His20 and Thr97. Residue Lys172 is part of the active site. Lys240 contacts NAD(+).

The protein belongs to the HIBADH-related family.

The protein resides in the cell membrane. Its subcellular location is the membrane raft. This is an uncharacterized protein from Bacillus subtilis (strain 168).